A 386-amino-acid chain; its full sequence is Putative acid--amine ligase YgiC (386 aa).

100–102 (RLD) contributes to the ATP binding site. The Mg(2+) site is built by D102, E115, and N117. Residues K267, K302, G309, Q336, and 371-373 (LIT) each bind ATP.

It belongs to the glutathionylspermidine synthase preATP-grasp family.

Its function is as follows. May be a ligase forming an amide bond. Shows ATPase activity. This chain is Putative acid--amine ligase YgiC (ygiC), found in Escherichia coli O157:H7.